A 137-amino-acid chain; its full sequence is Proofreading thioesterase EntH (137 aa).

Glutamate 63 (nucleophile or proton acceptor) is an active-site residue.

The protein belongs to the thioesterase PaaI family. In terms of assembly, homotetramer. Dimer of dimers. Interacts specifically with the aryl carrier protein (ArCP) domain of EntB.

The protein resides in the cytoplasm. It participates in siderophore biosynthesis; enterobactin biosynthesis. In terms of biological role, required for optimal enterobactin synthesis. Acts as a proofreading enzyme that prevents EntB misacylation by hydrolyzing the thioester bound existing between EntB and wrongly charged molecules. The protein is Proofreading thioesterase EntH of Cronobacter sakazakii (strain ATCC BAA-894) (Enterobacter sakazakii).